Reading from the N-terminus, the 140-residue chain is Large ribosomal subunit protein uL13 (140 aa).

Belongs to the universal ribosomal protein uL13 family. In terms of assembly, part of the 50S ribosomal subunit.

In terms of biological role, this protein is one of the early assembly proteins of the 50S ribosomal subunit, although it is not seen to bind rRNA by itself. It is important during the early stages of 50S assembly. This is Large ribosomal subunit protein uL13 from Sulfurimonas denitrificans (strain ATCC 33889 / DSM 1251) (Thiomicrospira denitrificans (strain ATCC 33889 / DSM 1251)).